The chain runs to 188 residues: PRA1 family protein F4 (188 aa).

Positions 1 to 13 (MANNDEITTSSHA) are enriched in polar residues. A disordered region spans residues 1–25 (MANNDEITTSSHASPAVNHESISRA). 4 helical membrane passes run 67–86 (YFRSNYAIVILNVIFFSLIW), 90–107 (SLIVFTGLVFLWIFLYFL), 119–139 (IDDRAVLIGLSVITIVLLLLT), and 142–162 (TFNIVAALMAGAVLVLIHAVI).

This sequence belongs to the PRA1 family.

It localises to the endosome membrane. In terms of biological role, may be involved in both secretory and endocytic intracellular trafficking in the endosomal/prevacuolar compartments. This is PRA1 family protein F4 (PRA1F4) from Arabidopsis thaliana (Mouse-ear cress).